The following is a 438-amino-acid chain: UDP-N-acetylmuramoylalanine--D-glutamate ligase (438 aa).

An ATP-binding site is contributed by 105-111 (GSNGKTT).

Belongs to the MurCDEF family.

The protein resides in the cytoplasm. It catalyses the reaction UDP-N-acetyl-alpha-D-muramoyl-L-alanine + D-glutamate + ATP = UDP-N-acetyl-alpha-D-muramoyl-L-alanyl-D-glutamate + ADP + phosphate + H(+). It participates in cell wall biogenesis; peptidoglycan biosynthesis. Its function is as follows. Cell wall formation. Catalyzes the addition of glutamate to the nucleotide precursor UDP-N-acetylmuramoyl-L-alanine (UMA). This is UDP-N-acetylmuramoylalanine--D-glutamate ligase from Oenococcus oeni (strain ATCC BAA-331 / PSU-1).